The primary structure comprises 334 residues: 4-hydroxy-2-methyl-3-oxo-4-farnesyl-3,4-dihydroquinoline-1-oxide ketoreductase (334 aa).

Catalysis depends on Y139, which acts as the Proton donor.

The protein belongs to the 3-beta-HSD family.

It catalyses the reaction aurachin B + NAD(+) + H2O = 4-hydroxy-2-methyl-3-oxo-4-[(2E,6E)-farnesyl]-3,4-dihydroquinoline 1-oxide + NADH. The enzyme catalyses 3,4-dihydroxy-2-methyl-4-[(2E,6E)-farnesyl]-3,4-dihydroquinoline 1-oxide + NAD(+) = 4-hydroxy-2-methyl-3-oxo-4-[(2E,6E)-farnesyl]-3,4-dihydroquinoline 1-oxide + NADH + H(+). Functionally, ketoreductase that catalyzes the final step in the conversion of aurachin C to aurachin B. Catalyzes the reduction of 4-hydroxy-2-methyl-3-oxo-4-[(2E,6E)-farnesyl]-3,4-dihydroquinoline-1-oxide to form 3,4-dihydroxy-2-methyl-4-[(2E,6E)-farnesyl]-3,4-dihydroquinoline 1-oxide, which then undergoes a spontaneous dehydration to form aurachin B. Accepts both NADH and NADPH, but has a preference for NADH. This is 4-hydroxy-2-methyl-3-oxo-4-farnesyl-3,4-dihydroquinoline-1-oxide ketoreductase from Stigmatella aurantiaca.